The following is a 583-amino-acid chain: Peptidyl-prolyl cis-trans isomerase FKBP10 (583 aa).

The N-terminal stretch at 1–27 is a signal peptide; sequence MLRAGPPSHTLLRLPLLQLLLLLLVQA. PPIase FKBP-type domains lie at 63–151, 175–263, 287–375, and 400–487; these read GDFV…LDVW, SDFV…IDVH, GDFM…IDFH, and GDFV…VSRE. Residues N71, N183, and N295 are each glycosylated (N-linked (GlcNAc...) asparagine). 2 consecutive EF-hand domains span residues 498–533 and 543–578; these read WHEDPPAHLFEHMDLNKDGEVPVEEFSTFIKAQVSE and DPEKTIGDMFQNQDRNQDGKITAEELKLKSDEDQDR. D511, N513, D515, E517, E522, D556, N558, D560, K562, and E567 together coordinate Ca(2+). Residues 534–583 are disordered; sequence GKGRLLPGQDPEKTIGDMFQNQDRNQDGKITAEELKLKSDEDQDRVHEEL. Positions 557 to 583 are enriched in basic and acidic residues; that stretch reads RNQDGKITAEELKLKSDEDQDRVHEEL. Residues 580–583 carry the Prevents secretion from ER motif; the sequence is HEEL.

Post-translationally, glycosylated and phosphorylated.

It localises to the endoplasmic reticulum lumen. The enzyme catalyses [protein]-peptidylproline (omega=180) = [protein]-peptidylproline (omega=0). Inhibited by both FK506 and rapamycin, but not by cyclosporin A. Its function is as follows. PPIases accelerate the folding of proteins during protein synthesis. This chain is Peptidyl-prolyl cis-trans isomerase FKBP10 (FKBP10), found in Bos taurus (Bovine).